The following is a 220-amino-acid chain: Ribosomal RNA large subunit methyltransferase E (220 aa).

G60, W62, D92, D108, and D133 together coordinate S-adenosyl-L-methionine. K173 acts as the Proton acceptor in catalysis. The tract at residues 195–220 (APRKPKASRDKSSETFILGRHLKQPR) is disordered.

The protein belongs to the class I-like SAM-binding methyltransferase superfamily. RNA methyltransferase RlmE family.

Its subcellular location is the cytoplasm. The enzyme catalyses uridine(2552) in 23S rRNA + S-adenosyl-L-methionine = 2'-O-methyluridine(2552) in 23S rRNA + S-adenosyl-L-homocysteine + H(+). Its function is as follows. Specifically methylates the uridine in position 2552 of 23S rRNA at the 2'-O position of the ribose in the fully assembled 50S ribosomal subunit. This chain is Ribosomal RNA large subunit methyltransferase E, found in Burkholderia pseudomallei (strain 1710b).